The following is a 214-amino-acid chain: C-type lectin domain family 2 member L (214 aa).

Residues 1-56 (MEPAREPPSRARPPPPLAARPAPAPAAPRPRSPAEAEARGPEGLLRRSGSGYEGST) are disordered. Positions 10-31 (RARPPPPLAARPAPAPAAPRPR) are enriched in pro residues. Phosphoserine is present on serine 32. A helical membrane pass occupies residues 69–89 (LLLGAIAVLLFAILVVMSILA). The 103-residue stretch at 107–209 (YGRKCYFFSE…CLMTRPWVCS (103 aa)) folds into the C-type lectin domain. Intrachain disulfides connect cysteine 128–cysteine 208 and cysteine 187–cysteine 200.

Its subcellular location is the membrane. In Homo sapiens (Human), this protein is C-type lectin domain family 2 member L (CLEC2L).